The following is a 546-amino-acid chain: Medium-chain-fatty-acid--CoA ligase (546 aa).

T185 serves as a coordination point for Mg(2+). The ATP site is built by W235 and T329. Position 330 (E330) interacts with Mg(2+). Residues D417, K434, K438, and W443 each coordinate ATP.

This sequence belongs to the ATP-dependent AMP-binding enzyme family.

It is found in the cytoplasm. The enzyme catalyses a medium-chain fatty acid + ATP + CoA = a medium-chain fatty acyl-CoA + AMP + diphosphate. It participates in lipid metabolism; fatty acid metabolism. In Ectopseudomonas oleovorans (Pseudomonas oleovorans), this protein is Medium-chain-fatty-acid--CoA ligase.